Here is a 717-residue protein sequence, read N- to C-terminus: uncharacterized protein (717 aa).

The protein belongs to the asfivirus C717R family.

It is found in the virion. This is an uncharacterized protein from Ornithodoros (relapsing fever ticks).